A 437-amino-acid chain; its full sequence is 3-ketoacyl-CoA thiolase (437 aa).

The active-site Acyl-thioester intermediate is C99. Active-site proton acceptor residues include H392 and C422.

Belongs to the thiolase-like superfamily. Thiolase family. As to quaternary structure, heterotetramer of two alpha chains (FadJ) and two beta chains (FadI).

The protein resides in the cytoplasm. The catalysed reaction is an acyl-CoA + acetyl-CoA = a 3-oxoacyl-CoA + CoA. It participates in lipid metabolism; fatty acid beta-oxidation. In terms of biological role, catalyzes the final step of fatty acid oxidation in which acetyl-CoA is released and the CoA ester of a fatty acid two carbons shorter is formed. The sequence is that of 3-ketoacyl-CoA thiolase from Pectobacterium carotovorum subsp. carotovorum (strain PC1).